Here is a 427-residue protein sequence, read N- to C-terminus: Glutamate-1-semialdehyde 2,1-aminomutase (427 aa).

At Lys265 the chain carries N6-(pyridoxal phosphate)lysine.

Belongs to the class-III pyridoxal-phosphate-dependent aminotransferase family. HemL subfamily. Homodimer. Requires pyridoxal 5'-phosphate as cofactor.

The protein localises to the cytoplasm. It catalyses the reaction (S)-4-amino-5-oxopentanoate = 5-aminolevulinate. The protein operates within porphyrin-containing compound metabolism; protoporphyrin-IX biosynthesis; 5-aminolevulinate from L-glutamyl-tRNA(Glu): step 2/2. The protein is Glutamate-1-semialdehyde 2,1-aminomutase of Bordetella avium (strain 197N).